The chain runs to 137 residues: Cellular retinoic acid-binding protein 1 (137 aa).

A Nuclear localization signal motif is present at residues 21 to 31 (RALGVNAMLRK). 132-134 (RIY) lines the all-trans-retinoate pocket.

Belongs to the calycin superfamily. Fatty-acid binding protein (FABP) family.

The protein localises to the cytoplasm. Cytosolic CRABPs may regulate the access of retinoic acid to the nuclear retinoic acid receptors. This is Cellular retinoic acid-binding protein 1 (CRABP1) from Pelodiscus sinensis (Chinese softshell turtle).